Consider the following 268-residue polypeptide: MSNKVHLGHTARKRFGQNFLTDGNVIDRIVGAISPDNHHVMVEIGPGLGALTEPVAEAVDNLTVVELDRDLVERLHHHPVLKDKLTIHQGDALQFDFGQLSVPGKKMKVFGNLPYNISTPLMFHLFEFAEQIETMHFMLQKEVVLRLSASPGCKAYGRLTVMAQYFCQVVPVLEVPPHSFTPAPKVDSAVVRLLPYAVKPFPCKDVTVLRHLCTTAFNMRRKTLRNNLKHMLSDDEFEQLGIDSSQRPEQISVQQYVAMANMVCDKKA.

Positions 18, 20, 45, 66, 91, and 112 each coordinate S-adenosyl-L-methionine.

It belongs to the class I-like SAM-binding methyltransferase superfamily. rRNA adenine N(6)-methyltransferase family. RsmA subfamily.

It localises to the cytoplasm. The catalysed reaction is adenosine(1518)/adenosine(1519) in 16S rRNA + 4 S-adenosyl-L-methionine = N(6)-dimethyladenosine(1518)/N(6)-dimethyladenosine(1519) in 16S rRNA + 4 S-adenosyl-L-homocysteine + 4 H(+). In terms of biological role, specifically dimethylates two adjacent adenosines (A1518 and A1519) in the loop of a conserved hairpin near the 3'-end of 16S rRNA in the 30S particle. May play a critical role in biogenesis of 30S subunits. The sequence is that of Ribosomal RNA small subunit methyltransferase A from Shewanella baltica (strain OS223).